The primary structure comprises 297 residues: Ribosomal RNA small subunit methyltransferase H (297 aa).

S-adenosyl-L-methionine contacts are provided by residues 34-36 (AGH), Asp-54, Phe-88, Asp-106, and Gln-113. A disordered region spans residues 272–297 (PLTAGEEETDRNPRARSAKLRAAEKK).

It belongs to the methyltransferase superfamily. RsmH family.

Its subcellular location is the cytoplasm. It catalyses the reaction cytidine(1402) in 16S rRNA + S-adenosyl-L-methionine = N(4)-methylcytidine(1402) in 16S rRNA + S-adenosyl-L-homocysteine + H(+). Specifically methylates the N4 position of cytidine in position 1402 (C1402) of 16S rRNA. This Acidobacterium capsulatum (strain ATCC 51196 / DSM 11244 / BCRC 80197 / JCM 7670 / NBRC 15755 / NCIMB 13165 / 161) protein is Ribosomal RNA small subunit methyltransferase H.